Consider the following 143-residue polypeptide: Ribonuclease H (143 aa).

The RNase H type-1 domain occupies 1 to 141 (MKHVEIFTDG…VDKLASDAAL (141 aa)). Residues D9, E47, D69, and D133 each coordinate Mg(2+).

It belongs to the RNase H family. Monomer. Requires Mg(2+) as cofactor.

It is found in the cytoplasm. It carries out the reaction Endonucleolytic cleavage to 5'-phosphomonoester.. Its function is as follows. Endonuclease that specifically degrades the RNA of RNA-DNA hybrids. This is Ribonuclease H from Novosphingobium aromaticivorans (strain ATCC 700278 / DSM 12444 / CCUG 56034 / CIP 105152 / NBRC 16084 / F199).